Consider the following 367-residue polypeptide: Glutamate 5-kinase (367 aa).

Lys-10 lines the ATP pocket. The substrate site is built by Ser-50, Asp-137, and Asn-149. 169 to 170 (TD) provides a ligand contact to ATP. One can recognise a PUA domain in the interval 275 to 353 (AGEITVDEGA…QQIDAILGYE (79 aa)).

Belongs to the glutamate 5-kinase family.

The protein localises to the cytoplasm. It catalyses the reaction L-glutamate + ATP = L-glutamyl 5-phosphate + ADP. It functions in the pathway amino-acid biosynthesis; L-proline biosynthesis; L-glutamate 5-semialdehyde from L-glutamate: step 1/2. Its function is as follows. Catalyzes the transfer of a phosphate group to glutamate to form L-glutamate 5-phosphate. The polypeptide is Glutamate 5-kinase (Salmonella paratyphi B (strain ATCC BAA-1250 / SPB7)).